We begin with the raw amino-acid sequence, 268 residues long: Ubiquinone biosynthesis protein COQ4 homolog, mitochondrial (268 aa).

Residues H171, D172, H175, and E187 each coordinate Zn(2+).

Belongs to the COQ4 family. In terms of assembly, component of a multi-subunit COQ enzyme complex. The cofactor is Zn(2+).

It localises to the mitochondrion inner membrane. It carries out the reaction a 4-hydroxy-3-methoxy-5-(all-trans-polyprenyl)benzoate + H(+) = a 2-methoxy-6-(all-trans-polyprenyl)phenol + CO2. The protein operates within cofactor biosynthesis; ubiquinone biosynthesis. Lyase that catalyzes the C1-decarboxylation of 4-hydroxy-3-methoxy-5-(all-trans-polyprenyl)benzoic acid into 2-methoxy-6-(all-trans-polyprenyl)phenol during ubiquinone biosynthesis. The protein is Ubiquinone biosynthesis protein COQ4 homolog, mitochondrial of Drosophila sechellia (Fruit fly).